The sequence spans 480 residues: Proline--tRNA ligase (480 aa).

Belongs to the class-II aminoacyl-tRNA synthetase family. ProS type 3 subfamily. In terms of assembly, homodimer.

It localises to the cytoplasm. The catalysed reaction is tRNA(Pro) + L-proline + ATP = L-prolyl-tRNA(Pro) + AMP + diphosphate. Functionally, catalyzes the attachment of proline to tRNA(Pro) in a two-step reaction: proline is first activated by ATP to form Pro-AMP and then transferred to the acceptor end of tRNA(Pro). In Alkaliphilus oremlandii (strain OhILAs) (Clostridium oremlandii (strain OhILAs)), this protein is Proline--tRNA ligase.